Here is a 316-residue protein sequence, read N- to C-terminus: Homoserine kinase (316 aa).

97 to 107 is an ATP binding site; that stretch reads PPARGLGSSAS.

It belongs to the GHMP kinase family. Homoserine kinase subfamily.

Its subcellular location is the cytoplasm. It carries out the reaction L-homoserine + ATP = O-phospho-L-homoserine + ADP + H(+). It functions in the pathway amino-acid biosynthesis; L-threonine biosynthesis; L-threonine from L-aspartate: step 4/5. In terms of biological role, catalyzes the ATP-dependent phosphorylation of L-homoserine to L-homoserine phosphate. The polypeptide is Homoserine kinase (Prochlorococcus marinus (strain MIT 9313)).